A 294-amino-acid polypeptide reads, in one-letter code: Cytidine deaminase (294 aa).

2 consecutive CMP/dCMP-type deaminase domains span residues 48 to 168 (DEDA…FGPK) and 186 to 294 (LTGD…VLLA). A substrate-binding site is contributed by 89–91 (NME). H102 contributes to the Zn(2+) binding site. The active-site Proton donor is E104. Zn(2+)-binding residues include C129 and C132.

Belongs to the cytidine and deoxycytidylate deaminase family. Homodimer. It depends on Zn(2+) as a cofactor.

It catalyses the reaction cytidine + H2O + H(+) = uridine + NH4(+). The enzyme catalyses 2'-deoxycytidine + H2O + H(+) = 2'-deoxyuridine + NH4(+). In terms of biological role, this enzyme scavenges exogenous and endogenous cytidine and 2'-deoxycytidine for UMP synthesis. This chain is Cytidine deaminase, found in Escherichia coli (strain K12).